Reading from the N-terminus, the 200-residue chain is Lipid A acyltransferase PagP (200 aa).

Positions 1 to 24 are cleaved as a signal peptide; sequence MRLKLTSHTCLFALSSLLVTPAFA. Residues His-72, Asp-115, and Ser-116 contribute to the active site.

It belongs to the lipid A palmitoyltransferase family. Homodimer.

The protein resides in the cell outer membrane. It catalyses the reaction a lipid A + a 1,2-diacyl-sn-glycero-3-phosphocholine = a hepta-acyl lipid A + a 2-acyl-sn-glycero-3-phosphocholine. It carries out the reaction a lipid IVA + a 1,2-diacyl-sn-glycero-3-phosphocholine = a lipid IVB + a 2-acyl-sn-glycero-3-phosphocholine. The enzyme catalyses a lipid IIA + a 1,2-diacyl-sn-glycero-3-phosphocholine = a lipid IIB + a 2-acyl-sn-glycero-3-phosphocholine. In terms of biological role, transfers a fatty acid residue from the sn-1 position of a phospholipid to the N-linked hydroxyfatty acid chain on the proximal unit of lipid A or its precursors. The polypeptide is Lipid A acyltransferase PagP (Dickeya dadantii (strain 3937) (Erwinia chrysanthemi (strain 3937))).